A 471-amino-acid polypeptide reads, in one-letter code: Argininosuccinate lyase (471 aa).

Belongs to the lyase 1 family. Argininosuccinate lyase subfamily.

It localises to the cytoplasm. It carries out the reaction 2-(N(omega)-L-arginino)succinate = fumarate + L-arginine. It participates in amino-acid biosynthesis; L-arginine biosynthesis; L-arginine from L-ornithine and carbamoyl phosphate: step 3/3. The polypeptide is Argininosuccinate lyase (Paramagnetospirillum magneticum (strain ATCC 700264 / AMB-1) (Magnetospirillum magneticum)).